The sequence spans 448 residues: Beclin-1 (448 aa).

An N-acetylmethionine modification is found at M1. Phosphoserine is present on residues S14 and S29. 3 positions are modified to phosphoserine; by AMPK: S88, S91, and S94. The BH3 motif lies at 106 to 125; sequence TMENLSRRLKVTGDLFDIMS. Positions 110 to 157 are interaction with BCL2 and BCL2L1; it reads LSRRLKVTGDLFDIMSGQTDVDHPLCEECTDTLLDQLDTQLNVTENEC. T117 carries the phosphothreonine; by DAPK1 modification. The stretch at 140–267 forms a coiled coil; it reads DTLLDQLDTQ…QLDKLKKTNV (128 aa). An evolutionary conserved domain (ECD) region spans residues 243–448; sequence DELKSVENQM…AWVSSQFYNK (206 aa). Glycyl lysine isopeptide (Lys-Gly) (interchain with G-Cter in ubiquitin) cross-links involve residues K400 and K435. A required for membrane-association region spans residues 423–448; the sequence is WTKALKFMLTNLKWGLAWVSSQFYNK.

The protein belongs to the beclin family. In terms of assembly, a homodimeric form is proposed to exist; this metastable form readily transits to ATG14- or UVRAG-containing complexes with BECN1:UVRAG being more stable than BECN1:ATG14. Component of the PI3K (PI3KC3/PI3K-III/class III phosphatidylinositol 3-kinase) complex the core of which is composed of the catalytic subunit PIK3C3, the regulatory subunit PIK3R4 and BECN1 associating with additional regulatory/auxiliary subunits to form alternative complex forms. Alternative complex forms containing a fourth regulatory subunit in a mutually exclusive manner are PI3K complex I (PI3KC3-C1) containing ATG14, and PI3K complex II (PI3KC3-C2) containing UVRAG. PI3KC3-C1 displays a V-shaped architecture with PIK3R4 serving as a bridge between PIK3C3 and the ATG14:BECN1 subcomplex. Both, PI3KC3-C1 and PI3KC3-C2, can associate with further regulatory subunits, such as RUBCN, SH3GLB1/Bif-1 and AMBRA1. PI3KC3-C1 probably associates with PIK3CB. Forms a complex with PPP2CA and AMBRA1; AMBRA1 and BECN1 components of the complex regulate MYC stability via different pathways. Component of the complex, at least composed of LRPPRC, BECN1 and BCL2; the interactions prevent BECN1 from forming an autophagy-inducing complex with PIK3C3. Interacts with AMBRA1, GOPC, GRID2. Interacts with BCL2 and BCL2L1 isoform Bcl-X(L); the interaction inhibits BECN1 function in promoting autophagy by interfering with the formation of the PI3K complex. Interacts with cytosolic HMGB1; inhibits the interaction of BECN1 and BCL2 leading to promotion of autophagy. Interacts with USP10, USP13, VMP1, DAPK1, RAB39A. Interacts with the poly-Gln domain of ATXN3; the interaction causes deubiquitination at Lys-400 and stabilizes BECN1. Interacts with SLAMF1. Interacts with TRIM5; the interaction causes activation of BECN1 by causing its dissociation from its inhibitors BCL2 and TAB2. Interacts with active ULK1 (phosphorylated on 'Ser-317') and MEFV simultaneously. Interacts with WDR81 and WDR91; negatively regulates the PI3 kinase/PI3K activity associated with endosomal membranes. Interacts with LAPTM4B; competes with EGFR for LAPTM4B binding; regulates EGFR activity. Interacts with TRIM50. Interacts with TRIM16. Interacts with ATG14; this interaction is increased in the absence of TMEM39A. Interacts with WASHC1; preventing interaction with AMBRA1 and the DCX(AMBRA1) complex and subsequent ubiquitination. Interacts with TRIM17. Interacts with BCL2L10/BCL-B (via BH1 domain). Interacts with SH3BGRL. Interacts with IRGM; enhancing BECN1-interacting partners and influencing the composition of the BECN1 complex. Interacts with ARMC3. Interacts with LRPPRC. (Microbial infection) Interacts with African swine fever virus (ASFV) apoptosis regulator Bcl-2 homolog; this interaction allows the virus to inhibit BECN1, and thus autophagy. Phosphorylation at Thr-117 by DAPK1 reduces its interaction with BCL2 and BCL2L1 and promotes induction of autophagy. In response to autophagic stimuli, phosphorylated at serine residues by AMPK in an ATG14-dependent manner, and this phosphorylation is critical for maximally efficient autophagy. In terms of processing, polyubiquitinated by NEDD4, both with 'Lys-11'- and 'Lys-63'-linkages. 'Lys-11'-linked polyubiquitination leads to degradation and is enhanced when the stabilizing interaction partner VPS34 is depleted. Deubiquitinated by USP10 and USP13, leading to stabilize the PIK3C3/VPS34-containing complexes. Polyubiquitinated at Lys-400 with 'Lys-48'-linkages. 'Lys-48'-linked polyubiquitination of Lys-400 leads to degradation. Deubiquitinated by ATXN3, leading to stabilization. Ubiquitinated at Lys-435 via 'Lys-63'-linkage by the DCX(AMBRA1) complex, thereby increasing the association between BECN1 and PIK3C3 to promote PIK3C3 activity. 'Lys-48'-linked ubiquitination by RNF216 leads to proteasomal degradation and autophagy inhibition. Post-translationally, proteolytically processed by caspases including CASP8 and CASP3; the C-terminal fragments lack autophagy-inducing capacity and are proposed to induce apoptosis. Thus the cleavage is proposed to be an determinant to switch from autophagy to apoptosis pathways affecting cellular homeostasis including viral infections and survival of tumor cells.

Its subcellular location is the cytoplasm. The protein localises to the golgi apparatus. The protein resides in the trans-Golgi network membrane. It is found in the endosome membrane. It localises to the endoplasmic reticulum membrane. Its subcellular location is the mitochondrion membrane. The protein localises to the cytoplasmic vesicle. The protein resides in the autophagosome. It is found in the mitochondrion. It localises to the nucleus. In terms of biological role, plays a central role in autophagy. Acts as a core subunit of the PI3K complex that mediates formation of phosphatidylinositol 3-phosphate; different complex forms are believed to play a role in multiple membrane trafficking pathways: PI3KC3-C1 is involved in initiation of autophagosomes and PI3KC3-C2 in maturation of autophagosomes and endocytosis. Involved in regulation of degradative endocytic trafficking and required for the abscission step in cytokinesis, probably in the context of PI3KC3-C2. Essential for the formation of PI3KC3-C2 but not PI3KC3-C1 PI3K complex forms. Involved in endocytosis. May play a role in antiviral host defense. Functionally, beclin-1-C 35 kDa localized to mitochondria can promote apoptosis; it induces the mitochondrial translocation of BAX and the release of proapoptotic factors. The chain is Beclin-1 (BECN1) from Sus scrofa (Pig).